Here is a 511-residue protein sequence, read N- to C-terminus: 2-isopropylmalate synthase (511 aa).

In terms of domain architecture, Pyruvate carboxyltransferase spans 5–267 (LIVFDTTLRD…DTNVDISQIV (263 aa)). 4 residues coordinate Mn(2+): aspartate 14, histidine 202, histidine 204, and asparagine 238. A regulatory domain region spans residues 393-511 (KLSWLKVVSE…YPVERAYPQV (119 aa)).

It belongs to the alpha-IPM synthase/homocitrate synthase family. LeuA type 1 subfamily. As to quaternary structure, homodimer. Mn(2+) serves as cofactor.

It localises to the cytoplasm. It carries out the reaction 3-methyl-2-oxobutanoate + acetyl-CoA + H2O = (2S)-2-isopropylmalate + CoA + H(+). It participates in amino-acid biosynthesis; L-leucine biosynthesis; L-leucine from 3-methyl-2-oxobutanoate: step 1/4. In terms of biological role, catalyzes the condensation of the acetyl group of acetyl-CoA with 3-methyl-2-oxobutanoate (2-ketoisovalerate) to form 3-carboxy-3-hydroxy-4-methylpentanoate (2-isopropylmalate). This chain is 2-isopropylmalate synthase, found in Nitrosococcus oceani (strain ATCC 19707 / BCRC 17464 / JCM 30415 / NCIMB 11848 / C-107).